Reading from the N-terminus, the 570-residue chain is Ribosome-inactivating protein SNAIf (570 aa).

A signal peptide spans 1–28 (MRVVTKLLYLVVLAICGLGIHGALTHTR). N-linked (GlcNAc...) asparagine glycosylation is found at Asn40, Asn62, and Asn140. Glu199 is an active-site residue. The N-linked (GlcNAc...) asparagine glycan is linked to Asn232. Disulfide bonds link Cys284–Cys316, Cys332–Cys351, and Cys373–Cys385. 2 consecutive Ricin B-type lectin domains span residues 319 to 439 (VEVT…WTVG) and 441 to 566 (VEPL…WITT). Residues 329-369 (DGLCVDVRDGHYIDGNTVQLGPCGNECNQLWTFRTDGTIRW) form a 1-alpha repeat. One copy of the 1-beta repeat lies at 370–405 (LGKCLTTSSSVMIYDCNTVPPEATKWVVSTDGTITN). Residues 408 to 440 (SGLVLTAPQAAEGTALSLENNIHAARQGWTVGD) form a 1-gamma repeat. One copy of the 2-alpha repeat lies at 452–489 (KQMCLTENGENNFVWLEDCVLNRVEQEWALYGDGTIRV). Cysteines 455 and 470 form a disulfide. N-linked (GlcNAc...) asparagine glycosylation occurs at Asn492. Residues 493–531 (RSLCVTSEDHEPSDLIVILKCEGSGNQRWVFNTNGTISN) form a 2-beta repeat. Cysteines 496 and 513 form a disulfide. N-linked (GlcNAc...) asparagine glycans are attached at residues Asn526 and Asn544. One copy of the 2-gamma repeat lies at 534-567 (AKLVMDVAQSNVSLRKIILYPPTGNPNQQWITTT).

It belongs to the ribosome-inactivating protein family. Type 2 RIP subfamily. As to quaternary structure, tetramer of four pairs of disulfide bound A-B chains. Post-translationally, the precursor is processed in two chains, A and B, that are linked by a disulfide bond. A small truncated form corresponding roughly to the second ricin B-type lectin domain of the B chain, TrSNAIf, can also be produced. In terms of processing, N-glycosylated. In terms of tissue distribution, expressed in fruits.

It catalyses the reaction Endohydrolysis of the N-glycosidic bond at one specific adenosine on the 28S rRNA.. Functionally, neu5Ac(alpha2-6)Gal/GalNAc specific agglutinin. Behaves as a type-2 ribosome-inactivating protein. Strongly inhibits mammalian but not plant ribosomes. The A chain is responsible for inhibiting protein synthesis through the catalytic inactivation of 60S ribosomal subunits by removing adenine from position 4,324 of 28S rRNA. The B chain binds to cell receptors and probably facilitates the entry into the cell of the A chain; B chains are also responsible for cell agglutination (lectin activity). Involved in plant defense against insects. In terms of biological role, binds Neu5Ac(alpha2-6)Gal/GalNAc but has no clear agglutination activity. This is Ribosome-inactivating protein SNAIf from Sambucus nigra (European elder).